We begin with the raw amino-acid sequence, 328 residues long: NADH:quinone reductase (328 aa).

Residues 22–24, threonine 75, lysine 124, alanine 150, 178–180, and 201–202 each bind FMN; these read GMQ, SGG, and GT.

It belongs to the nitronate monooxygenase family. As to quaternary structure, monomer. The cofactor is FMN.

It carries out the reaction a quinone + NADH + H(+) = a quinol + NAD(+). Catalyzes the NADH-dependent reduction of a broad spectrum of quinone substrates, generating the corresponding hydroquinones. Highly prefers NADH to NADPH as a reducing substrate. Also displays a small NADH oxidase activity. Does not exhibit nitronate monooxygenase activity; is inactive against propionate 3-nitronate, 3-nitropropionate, nitroethane, 1-nitropropane, 2-nitropropane, and the anionic forms ethylnitronate, propyl-1-nitronate, and propyl-2-nitronate. Has no azoreductase activity since it is not able to reduce the azo dye methyl red with NADH. May be required to maintain an appropriate [NAD(+)]/[NADH] ratio for the catabolism of fatty acids in P.aeruginosa PAO1. This is NADH:quinone reductase from Pseudomonas aeruginosa (strain ATCC 15692 / DSM 22644 / CIP 104116 / JCM 14847 / LMG 12228 / 1C / PRS 101 / PAO1).